The chain runs to 101 residues: Protein PrgJ (101 aa).

This sequence to S.flexneri MxiI.

Its function is as follows. Required for invasion of epithelial cells. The sequence is that of Protein PrgJ (prgJ) from Salmonella typhimurium (strain LT2 / SGSC1412 / ATCC 700720).